Here is a 681-residue protein sequence, read N- to C-terminus: Peroxisomal acyl-coenzyme A oxidase 2 (681 aa).

Serine 3 and serine 9 each carry phosphoserine. 6 positions are modified to N6-succinyllysine: lysine 66, lysine 137, lysine 303, lysine 453, lysine 561, and lysine 667. The Microbody targeting signal motif lies at 679 to 681 (HKM).

The protein belongs to the acyl-CoA oxidase family. As to quaternary structure, homodimer. It depends on FAD as a cofactor. As to expression, most abundant in liver. Also expressed in kidney. Not present in any other tissues tested.

The protein localises to the peroxisome. The enzyme catalyses (25R)-3alpha,7alpha,12alpha-trihydroxy-5beta-cholestan-26-oyl-CoA + A + H2O = (24R,25R)-3alpha,7alpha,12alpha,24-tetrahydroxy-5beta-cholestan-26-oyl-CoA + AH2. The catalysed reaction is (25S)-3alpha,7alpha,12alpha-trihydroxy-5beta-cholestan-26-oyl-CoA + O2 = (24E)-3alpha,7alpha,12alpha-trihydroxy-5beta-cholest-24-en-26-oyl-CoA + H2O2. Its function is as follows. Oxidizes the CoA esters of the bile acid intermediates di- and tri-hydroxycoprostanic acids. Capable of oxidizing short as well as long chain 2-methyl branched fatty acids. The polypeptide is Peroxisomal acyl-coenzyme A oxidase 2 (Rattus norvegicus (Rat)).